Consider the following 216-residue polypeptide: Enolase-phosphatase E1 (216 aa).

Residues aspartate 8 and glutamate 10 each contribute to the Mg(2+) site. Substrate is bound by residues 115–116 and lysine 149; that span reads SS. A Mg(2+)-binding site is contributed by aspartate 172.

It belongs to the HAD-like hydrolase superfamily. MasA/MtnC family. In terms of assembly, monomer. It depends on Mg(2+) as a cofactor.

It is found in the cytoplasm. Its subcellular location is the nucleus. It carries out the reaction 5-methylsulfanyl-2,3-dioxopentyl phosphate + H2O = 1,2-dihydroxy-5-(methylsulfanyl)pent-1-en-3-one + phosphate. It participates in amino-acid biosynthesis; L-methionine biosynthesis via salvage pathway; L-methionine from S-methyl-5-thio-alpha-D-ribose 1-phosphate: step 3/6. The protein operates within amino-acid biosynthesis; L-methionine biosynthesis via salvage pathway; L-methionine from S-methyl-5-thio-alpha-D-ribose 1-phosphate: step 4/6. Its function is as follows. Bifunctional enzyme that catalyzes the enolization of 2,3-diketo-5-methylthiopentyl-1-phosphate (DK-MTP-1-P) into the intermediate 2-hydroxy-3-keto-5-methylthiopentenyl-1-phosphate (HK-MTPenyl-1-P), which is then dephosphorylated to form the acireductone 1,2-dihydroxy-3-keto-5-methylthiopentene (DHK-MTPene). This Schizosaccharomyces pombe (strain 972 / ATCC 24843) (Fission yeast) protein is Enolase-phosphatase E1 (utr4).